Consider the following 211-residue polypeptide: Thiamine-phosphate synthase (211 aa).

Residues 37-41 (QLRIK) and Asn-69 contribute to the 4-amino-2-methyl-5-(diphosphooxymethyl)pyrimidine site. Residues Asp-70 and Asp-89 each coordinate Mg(2+). Residue Ser-108 participates in 4-amino-2-methyl-5-(diphosphooxymethyl)pyrimidine binding. Residue 134-136 (TQT) coordinates 2-[(2R,5Z)-2-carboxy-4-methylthiazol-5(2H)-ylidene]ethyl phosphate. Lys-137 is a 4-amino-2-methyl-5-(diphosphooxymethyl)pyrimidine binding site. 2-[(2R,5Z)-2-carboxy-4-methylthiazol-5(2H)-ylidene]ethyl phosphate is bound by residues Gly-166 and 186–187 (VS).

The protein belongs to the thiamine-phosphate synthase family. The cofactor is Mg(2+).

The enzyme catalyses 2-[(2R,5Z)-2-carboxy-4-methylthiazol-5(2H)-ylidene]ethyl phosphate + 4-amino-2-methyl-5-(diphosphooxymethyl)pyrimidine + 2 H(+) = thiamine phosphate + CO2 + diphosphate. The catalysed reaction is 2-(2-carboxy-4-methylthiazol-5-yl)ethyl phosphate + 4-amino-2-methyl-5-(diphosphooxymethyl)pyrimidine + 2 H(+) = thiamine phosphate + CO2 + diphosphate. It carries out the reaction 4-methyl-5-(2-phosphooxyethyl)-thiazole + 4-amino-2-methyl-5-(diphosphooxymethyl)pyrimidine + H(+) = thiamine phosphate + diphosphate. Its pathway is cofactor biosynthesis; thiamine diphosphate biosynthesis; thiamine phosphate from 4-amino-2-methyl-5-diphosphomethylpyrimidine and 4-methyl-5-(2-phosphoethyl)-thiazole: step 1/1. Condenses 4-methyl-5-(beta-hydroxyethyl)thiazole monophosphate (THZ-P) and 2-methyl-4-amino-5-hydroxymethyl pyrimidine pyrophosphate (HMP-PP) to form thiamine monophosphate (TMP). This Salmonella dublin (strain CT_02021853) protein is Thiamine-phosphate synthase.